The following is a 432-amino-acid chain: Glutamate-1-semialdehyde 2,1-aminomutase 1 (432 aa).

The residue at position 268 (K268) is an N6-(pyridoxal phosphate)lysine.

It belongs to the class-III pyridoxal-phosphate-dependent aminotransferase family. HemL subfamily. Homodimer. Pyridoxal 5'-phosphate is required as a cofactor.

It is found in the cytoplasm. It carries out the reaction (S)-4-amino-5-oxopentanoate = 5-aminolevulinate. Its pathway is porphyrin-containing compound metabolism; protoporphyrin-IX biosynthesis; 5-aminolevulinate from L-glutamyl-tRNA(Glu): step 2/2. The chain is Glutamate-1-semialdehyde 2,1-aminomutase 1 from Bacillus cereus (strain B4264).